A 284-amino-acid chain; its full sequence is Nucleotide-binding protein Sden_0486 (284 aa).

Residue 8–15 (GRSGSGKS) coordinates ATP. 56–59 (DVRN) contributes to the GTP binding site.

The protein belongs to the RapZ-like family.

Its function is as follows. Displays ATPase and GTPase activities. The chain is Nucleotide-binding protein Sden_0486 from Shewanella denitrificans (strain OS217 / ATCC BAA-1090 / DSM 15013).